We begin with the raw amino-acid sequence, 523 residues long: Alpha,alpha-trehalose-phosphate synthase [UDP-forming] (523 aa).

D-glucose 6-phosphate-binding residues include Tyr98 and Asp152. Residues Arg288 and Lys293 each coordinate UDP. 2 residues coordinate UDP-alpha-D-glucose: Arg288 and Lys293. Arg326 contributes to the D-glucose 6-phosphate binding site. 387-395 (DGMNLVSYE) contributes to the UDP-alpha-D-glucose binding site. Position 391-395 (391-395 (LVSYE)) interacts with UDP. A disordered region spans residues 503–523 (QQFNLGEQREEGRLEPGEFDD). Residues 509–523 (EQREEGRLEPGEFDD) are compositionally biased toward basic and acidic residues.

Belongs to the glycosyltransferase 20 family.

It carries out the reaction D-glucose 6-phosphate + UDP-alpha-D-glucose = alpha,alpha-trehalose 6-phosphate + UDP + H(+). It functions in the pathway carbohydrate biosynthesis. In terms of biological role, synthase catalytic subunit of the trehalose synthase complex that catalyzes the production of trehalose from glucose-6-phosphate and UDP-alpha-D-glucose in a two step process. The disaccharide trehalose serves as a storage carbohydrate that is mobilized during conidial germination. Trehalose also serves as a protectant for cell integrity during stress. The sequence is that of Alpha,alpha-trehalose-phosphate synthase [UDP-forming] from Botryotinia fuckeliana (strain B05.10) (Noble rot fungus).